The sequence spans 279 residues: Tryptophan synthase alpha chain (279 aa).

Active-site proton acceptor residues include glutamate 63 and aspartate 74.

This sequence belongs to the TrpA family. As to quaternary structure, tetramer of two alpha and two beta chains.

The enzyme catalyses (1S,2R)-1-C-(indol-3-yl)glycerol 3-phosphate + L-serine = D-glyceraldehyde 3-phosphate + L-tryptophan + H2O. The protein operates within amino-acid biosynthesis; L-tryptophan biosynthesis; L-tryptophan from chorismate: step 5/5. Its function is as follows. The alpha subunit is responsible for the aldol cleavage of indoleglycerol phosphate to indole and glyceraldehyde 3-phosphate. This Prochlorococcus marinus subsp. pastoris (strain CCMP1986 / NIES-2087 / MED4) protein is Tryptophan synthase alpha chain.